Here is a 584-residue protein sequence, read N- to C-terminus: 2-succinyl-5-enolpyruvyl-6-hydroxy-3-cyclohexene-1-carboxylate synthase (584 aa).

The segment at 563 to 584 (TDAEASHRERERLADRVTGLSV) is disordered. Residues 566–577 (EASHRERERLAD) are compositionally biased toward basic and acidic residues.

The protein belongs to the TPP enzyme family. MenD subfamily. In terms of assembly, homodimer. Mg(2+) serves as cofactor. The cofactor is Mn(2+). It depends on thiamine diphosphate as a cofactor.

It carries out the reaction isochorismate + 2-oxoglutarate + H(+) = 5-enolpyruvoyl-6-hydroxy-2-succinyl-cyclohex-3-ene-1-carboxylate + CO2. The protein operates within quinol/quinone metabolism; 1,4-dihydroxy-2-naphthoate biosynthesis; 1,4-dihydroxy-2-naphthoate from chorismate: step 2/7. It functions in the pathway quinol/quinone metabolism; menaquinone biosynthesis. Functionally, catalyzes the thiamine diphosphate-dependent decarboxylation of 2-oxoglutarate and the subsequent addition of the resulting succinic semialdehyde-thiamine pyrophosphate anion to isochorismate to yield 2-succinyl-5-enolpyruvyl-6-hydroxy-3-cyclohexene-1-carboxylate (SEPHCHC). The polypeptide is 2-succinyl-5-enolpyruvyl-6-hydroxy-3-cyclohexene-1-carboxylate synthase (Halobacterium salinarum (strain ATCC 29341 / DSM 671 / R1)).